The sequence spans 88 residues: MKKILIGGIRLYQKYISRFTPATCRFYPTCSAYGIEAIQTHGALKGSYLAIRRISKCHPFHKGGLDFVPPKKEKNADSEHSCKAHHHH.

A disordered region spans residues 66–88 (DFVPPKKEKNADSEHSCKAHHHH). Positions 69 to 82 (PPKKEKNADSEHSC) are enriched in basic and acidic residues.

The protein belongs to the UPF0161 family.

The protein resides in the cell membrane. In terms of biological role, could be involved in insertion of integral membrane proteins into the membrane. In Listeria monocytogenes serotype 4b (strain CLIP80459), this protein is Putative membrane protein insertion efficiency factor.